A 143-amino-acid polypeptide reads, in one-letter code: MPPKKKVTGLIKLQIQAGAANPAPPIGPALGQHGVNIMEFCKAYNAATEAQRGNVIPVEITVYEDRSFTFITKTPPAAELIKKAAGVAKGSATPHTAKVASLTREQVREIAQTKLADLNANDIDAAEKIIAGTARSMGVTVTD.

The protein belongs to the universal ribosomal protein uL11 family. Part of the ribosomal stalk of the 50S ribosomal subunit. Interacts with L10 and the large rRNA to form the base of the stalk. L10 forms an elongated spine to which L12 dimers bind in a sequential fashion forming a multimeric L10(L12)X complex. Post-translationally, one or more lysine residues are methylated.

Its function is as follows. Forms part of the ribosomal stalk which helps the ribosome interact with GTP-bound translation factors. This is Large ribosomal subunit protein uL11 from Beutenbergia cavernae (strain ATCC BAA-8 / DSM 12333 / CCUG 43141 / JCM 11478 / NBRC 16432 / NCIMB 13614 / HKI 0122).